The following is a 640-amino-acid chain: Replication protein A 70 kDa DNA-binding subunit A (640 aa).

The OB DNA-binding region spans 211-293; sequence AIKARVTAKG…NHLKNEWEIF (83 aa). The C4-type zinc finger occupies 503 to 529; it reads CPLMIGDKQCNKKVTRSGTNRWLCDRC.

This sequence belongs to the replication factor A protein 1 family. As to quaternary structure, heterotrimer of RPA1, RPA2 and RPA3 (canonical replication protein A complex). Interacts with RPA2A. Expressed in roots, leaves, stalks and flower buds.

It is found in the nucleus. Functionally, component of the replication protein A complex (RPA) required for DNA recombination, repair and replication. The activity of RPA is mediated by single-stranded DNA binding and protein interactions. Plays an essential role at later stages of meiotic recombination events required for the formation of class I crossovers. Is essential for normal progression through meiosis in pollen mother cells. Is involved in repair of double-strand DNA breaks (DSBs) induced by genotoxic stresses, but does not seem to be required for the repair of meiotic DSBs. This chain is Replication protein A 70 kDa DNA-binding subunit A (RPA1A), found in Arabidopsis thaliana (Mouse-ear cress).